The sequence spans 332 residues: Formamidase (332 aa).

One can recognise a CN hydrolase domain in the interval 14–259; it reads FLTALIQYPV…WEIVTAEVYP (246 aa). The Proton acceptor role is filled by Glu60. The active-site Proton donor is the Lys132. Cys165 serves as the catalytic Nucleophile.

It belongs to the carbon-nitrogen hydrolase superfamily. Aliphatic amidase family.

The enzyme catalyses formamide + H2O = formate + NH4(+). Its function is as follows. Is an aliphatic amidase with a restricted substrate specificity, as it only hydrolyzes formamide. The polypeptide is Formamidase (Bacillus cereus (strain B4264)).